A 278-amino-acid chain; its full sequence is 1-acyl-sn-glycerol-3-phosphate acyltransferase beta (278 aa).

The signal sequence occupies residues 1–23; that stretch reads MDPWPWLTAALLLLLLLVQLSRT. Residues 24-29 lie on the Lumenal side of the membrane; the sequence is ARFYAK. The chain crosses the membrane as a helical span at residues 30–50; the sequence is VGLYCVLCLSFSAAASIVCLL. Over 51–121 the chain is Cytoplasmic; sequence RHGGRTVDNM…PKRCVQIAKR (71 aa). Residues 98–103 carry the HXXXXD motif motif; the sequence is HQSILD. Residues 122–142 form a helical membrane-spanning segment; the sequence is ELMFTGPVGLIMYLGGVYFIN. At 143–278 the chain is on the lumenal side; the sequence is RQQARTAMSV…IKEPGVLPAQ (136 aa). Positions 172 to 175 match the EGTR motif motif; the sequence is EGTR.

The protein belongs to the 1-acyl-sn-glycerol-3-phosphate acyltransferase family. Expressed at high levels in the liver, at intermediate levels in the kidney, gut, heart and skeletal muscles. Undetectable in brain and spleen.

It localises to the endoplasmic reticulum membrane. The enzyme catalyses a 1-acyl-sn-glycero-3-phosphate + an acyl-CoA = a 1,2-diacyl-sn-glycero-3-phosphate + CoA. It catalyses the reaction 1-(9Z-octadecenoyl)-sn-glycero-3-phosphate + (9Z)-octadecenoyl-CoA = 1,2-di-(9Z-octadecenoyl)-sn-glycero-3-phosphate + CoA. The catalysed reaction is 1-(9Z-octadecenoyl)-sn-glycero-3-phosphate + hexadecanoyl-CoA = 1-(9Z)-octadecenoyl-2-hexadecanoyl-sn-glycero-3-phosphate + CoA. It carries out the reaction heptadecanoyl-CoA + 1-(9Z-octadecenoyl)-sn-glycero-3-phosphate = 1-(9Z)-octadecenoyl-2-heptadecanoyl-sn-glycero-3-phosphate + CoA. The enzyme catalyses 1-(9Z-octadecenoyl)-sn-glycero-3-phosphate + (9Z,12Z)-octadecadienoyl-CoA = 1-(9Z)-octadecenoyl-2-(9Z,12Z)-octadecadienoyl-sn-glycero-3-phosphate + CoA. It catalyses the reaction 1-(9Z-octadecenoyl)-sn-glycero-3-phosphate + tetradecanoyl-CoA = 1-(9Z)-octadecenoyl-2-tetradecanoyl-sn-glycero-3-phosphate + CoA. The catalysed reaction is pentadecanoyl-CoA + 1-(9Z-octadecenoyl)-sn-glycero-3-phosphate = 1-(9Z)-octadecenoyl-2-pentadecanoyl-sn-glycero-3-phosphate + CoA. It carries out the reaction 1-hexadecanoyl-sn-glycero-3-phosphate + (9Z)-octadecenoyl-CoA = 1-hexadecanoyl-2-(9Z-octadecenoyl)-sn-glycero-3-phosphate + CoA. The enzyme catalyses 1-tetradecanoyl-sn-glycerol 3-phosphate + (9Z)-octadecenoyl-CoA = 1-tetradecanoyl-2-(9Z)-octadecenoyl-sn-glycero-3-phosphate + CoA. It catalyses the reaction 1-(9Z,12Z,15Z)-octadecatrienoyl-sn-glycero-3-phosphate + (9Z)-octadecenoyl-CoA = 1-(9Z,12Z,15Z)-octadecatrienoyl-2-(9Z)-octadecenoyl-sn-glycero-3-phosphate + CoA. The catalysed reaction is 1-(6Z,9Z,12Z-octadecatrienoyl)-sn-glycero-3-phosphate + (9Z)-octadecenoyl-CoA = (6Z,9Z,12Z)-octadecatrienoyl-2-(9Z)-octadecenoyl-sn-glycero-3-phosphate + CoA. It carries out the reaction 1-eicosanoyl-sn-glycero-3-phosphate + (9Z)-octadecenoyl-CoA = 1-eicosanoyl-2-(9Z)-octadecenoyl-sn-glycero-3-phosphate + CoA. The enzyme catalyses 1-hexadecanoyl-sn-glycero-3-phosphate + octadecanoyl-CoA = 1-hexadecanoyl-2-octadecanoyl-sn-glycero-3-phosphate + CoA. It catalyses the reaction 1-hexadecanoyl-sn-glycero-3-phosphate + (5Z,8Z,11Z,14Z)-eicosatetraenoyl-CoA = 1-hexadecanoyl-2-(5Z,8Z,11Z,14Z-eicosatetraenoyl)-sn-glycero-3-phosphate + CoA. The catalysed reaction is 1-hexadecanoyl-sn-glycero-3-phosphate + hexadecanoyl-CoA = 1,2-dihexadecanoyl-sn-glycero-3-phosphate + CoA. It carries out the reaction 1-hexadecanoyl-sn-glycero-3-phosphate + tetradecanoyl-CoA = 1-hexadecanoyl-2-tetradecanoyl-sn-glycero-3-phosphate + CoA. The enzyme catalyses (11Z)-octadecenoyl-CoA + 1-(9Z-octadecenoyl)-sn-glycero-3-phosphate = 1-(9Z)-octadecenoyl-2-(11Z)-octadecenoyl-sn-glycero-3-phosphate + CoA. The protein operates within phospholipid metabolism; CDP-diacylglycerol biosynthesis; CDP-diacylglycerol from sn-glycerol 3-phosphate: step 2/3. Functionally, converts 1-acyl-sn-glycerol-3-phosphate (lysophosphatidic acid or LPA) into 1,2-diacyl-sn-glycerol-3-phosphate (phosphatidic acid or PA) by incorporating an acyl moiety at the sn-2 position of the glycerol backbone. This is 1-acyl-sn-glycerol-3-phosphate acyltransferase beta (Agpat2) from Mus musculus (Mouse).